We begin with the raw amino-acid sequence, 92 residues long: Probable Fe(2+)-trafficking protein (92 aa).

This sequence belongs to the Fe(2+)-trafficking protein family.

In terms of biological role, could be a mediator in iron transactions between iron acquisition and iron-requiring processes, such as synthesis and/or repair of Fe-S clusters in biosynthetic enzymes. In Shewanella piezotolerans (strain WP3 / JCM 13877), this protein is Probable Fe(2+)-trafficking protein.